Reading from the N-terminus, the 391-residue chain is Elongation factor Tu (391 aa).

The 192-residue stretch at 10 to 201 folds into the tr-type G domain; it reads KPHVNIGTIG…AVDEFIPTPE (192 aa). The interval 19–26 is G1; that stretch reads GHVDHGKT. GTP is bound at residue 19–26; sequence GHVDHGKT. Thr26 contacts Mg(2+). Residues 55 to 59 are G2; it reads GITIS. Residues 76–79 are G3; that stretch reads DCPG. GTP is bound by residues 76–80 and 131–134; these read DCPGH and NKVD. The segment at 131 to 134 is G4; it reads NKVD. Residues 169–171 form a G5 region; it reads SAL.

It belongs to the TRAFAC class translation factor GTPase superfamily. Classic translation factor GTPase family. EF-Tu/EF-1A subfamily. As to quaternary structure, monomer.

Its subcellular location is the cytoplasm. The enzyme catalyses GTP + H2O = GDP + phosphate + H(+). In terms of biological role, GTP hydrolase that promotes the GTP-dependent binding of aminoacyl-tRNA to the A-site of ribosomes during protein biosynthesis. This chain is Elongation factor Tu, found in Roseobacter denitrificans (strain ATCC 33942 / OCh 114) (Erythrobacter sp. (strain OCh 114)).